Reading from the N-terminus, the 262-residue chain is Adenosylcobinamide-GDP ribazoletransferase (262 aa).

The next 6 membrane-spanning stretches (helical) occupy residues 43–63 (YFGL…WLTQ), 66–86 (LPAG…TGGF), 120–140 (GALA…ELAL), 146–166 (AGSA…SIIF), 191–211 (LLIL…LAAL), and 242–262 (AAQQ…GNIL).

It belongs to the CobS family. Mg(2+) is required as a cofactor.

It is found in the cell inner membrane. The catalysed reaction is alpha-ribazole + adenosylcob(III)inamide-GDP = adenosylcob(III)alamin + GMP + H(+). It catalyses the reaction alpha-ribazole 5'-phosphate + adenosylcob(III)inamide-GDP = adenosylcob(III)alamin 5'-phosphate + GMP + H(+). Its pathway is cofactor biosynthesis; adenosylcobalamin biosynthesis; adenosylcobalamin from cob(II)yrinate a,c-diamide: step 7/7. Joins adenosylcobinamide-GDP and alpha-ribazole to generate adenosylcobalamin (Ado-cobalamin). Also synthesizes adenosylcobalamin 5'-phosphate from adenosylcobinamide-GDP and alpha-ribazole 5'-phosphate. The protein is Adenosylcobinamide-GDP ribazoletransferase of Shewanella baltica (strain OS155 / ATCC BAA-1091).